The chain runs to 395 residues: Xylose isomerase (395 aa).

Active-site residues include His54 and Asp57. Mg(2+) is bound by residues Glu181, Glu217, His220, Asp245, Asp255, Asp257, and Asp293.

The protein belongs to the xylose isomerase family. As to quaternary structure, homotetramer. Mg(2+) is required as a cofactor.

It localises to the cytoplasm. The enzyme catalyses alpha-D-xylose = alpha-D-xylulofuranose. This chain is Xylose isomerase, found in Pseudarthrobacter chlorophenolicus (strain ATCC 700700 / DSM 12829 / CIP 107037 / JCM 12360 / KCTC 9906 / NCIMB 13794 / A6) (Arthrobacter chlorophenolicus).